Here is a 231-residue protein sequence, read N- to C-terminus: LexA repressor (231 aa).

The H-T-H motif DNA-binding region spans 28–48 (IREIGEALDIRSTNGVNDHLK). Residues Ser149 and Lys186 each act as for autocatalytic cleavage activity in the active site.

This sequence belongs to the peptidase S24 family. Homodimer.

The catalysed reaction is Hydrolysis of Ala-|-Gly bond in repressor LexA.. Functionally, represses a number of genes involved in the response to DNA damage (SOS response), including recA and lexA. In the presence of single-stranded DNA, RecA interacts with LexA causing an autocatalytic cleavage which disrupts the DNA-binding part of LexA, leading to derepression of the SOS regulon and eventually DNA repair. This is LexA repressor from Anaeromyxobacter sp. (strain Fw109-5).